The chain runs to 448 residues: Phosphoglucosamine mutase (448 aa).

The active-site Phosphoserine intermediate is the S104. 4 residues coordinate Mg(2+): S104, D243, D245, and D247. S104 is subject to Phosphoserine.

The protein belongs to the phosphohexose mutase family. Requires Mg(2+) as cofactor. Post-translationally, activated by phosphorylation.

It carries out the reaction alpha-D-glucosamine 1-phosphate = D-glucosamine 6-phosphate. Its function is as follows. Catalyzes the conversion of glucosamine-6-phosphate to glucosamine-1-phosphate. This is Phosphoglucosamine mutase from Xylella fastidiosa (strain Temecula1 / ATCC 700964).